The sequence spans 308 residues: MAPGGSALKEVMESNSTGMDYEVKTAKVEVNNNKPTKPGSAGIGKYGIHSNNGVYELLECPVCTNLMYPPIHQCPNGHTLCSNCKLRVQNTCPTCRYELGNIRCLALEKVAESLEVPCRYQNLGCHDIFPYYSKLKHEQHCRFRPYTCPYAGSECSVTGDIPTLVVHLKDDHKVDMHDGCTFNHRYVKSNPHEVENATWMLTVFNCFGRQFCLHFEAFQLGMAPVYMAFLRFMGDENEAKKFSYSLEVGAHGRKLTWQGIPRSIRDSHRKVRDSQDGLIIPRNLALYFSGGDRQELKLRVTGRIWKEE.

Residues C60–R96 form an RING-type zinc finger. The tract at residues V110–R303 is SBD. Residues S113 to K173 form an SIAH-type zinc finger. The Zn(2+) site is built by C118, C125, H137, C141, C148, C155, H167, and H172.

Belongs to the SINA (Seven in absentia) family. Interacts with RAP2-2. Interacts with SINAT6. Interacts with ATG6 and TRAF1A. Interacts with WAV3. Interacts with FREE1. Interacts with ELC/VPS23A.

Its subcellular location is the endosome. The protein localises to the multivesicular body. It localises to the cytoplasmic vesicle. The protein resides in the autophagosome. It carries out the reaction S-ubiquitinyl-[E2 ubiquitin-conjugating enzyme]-L-cysteine + [acceptor protein]-L-lysine = [E2 ubiquitin-conjugating enzyme]-L-cysteine + N(6)-ubiquitinyl-[acceptor protein]-L-lysine.. The protein operates within protein modification; protein ubiquitination. Its function is as follows. E3 ubiquitin-protein ligase that mediates ubiquitination and subsequent proteasomal degradation of target proteins. E3 ubiquitin ligases accept ubiquitin from an E2 ubiquitin-conjugating enzyme in the form of a thioester and then directly transfers the ubiquitin to targeted substrates. It probably triggers the ubiquitin-mediated degradation of different substrates. Mediates the proteasomal-dependent degradation of ATG6, a component of the autophagosome complex. Requires TRAF1A/MUSE14 and TRAF1B/MUSE13 to target ATG6 for ubiquitination and subsequent regulation of autophagosome assembly. Modulates directly the ubiquitination and proteasomal-dependent degradation of FREE1, a component of the ESCRT-I complex. Modulates directly the ubiquitination and proteasomal-dependent degradation of ELC/VPS23A, a component of the ESCRT-I complex. This chain is E3 ubiquitin-protein ligase SINAT2, found in Arabidopsis thaliana (Mouse-ear cress).